The chain runs to 426 residues: Serine--tRNA ligase (426 aa).

Residue 227-229 coordinates L-serine; it reads TSE. Residues 258 to 260 and Val274 each bind ATP; that span reads RKE. Glu281 contributes to the L-serine binding site. Residue 345–348 participates in ATP binding; it reads ELTS. Thr380 provides a ligand contact to L-serine.

This sequence belongs to the class-II aminoacyl-tRNA synthetase family. Type-1 seryl-tRNA synthetase subfamily. Homodimer. The tRNA molecule binds across the dimer.

The protein localises to the cytoplasm. It carries out the reaction tRNA(Ser) + L-serine + ATP = L-seryl-tRNA(Ser) + AMP + diphosphate + H(+). The catalysed reaction is tRNA(Sec) + L-serine + ATP = L-seryl-tRNA(Sec) + AMP + diphosphate + H(+). It participates in aminoacyl-tRNA biosynthesis; selenocysteinyl-tRNA(Sec) biosynthesis; L-seryl-tRNA(Sec) from L-serine and tRNA(Sec): step 1/1. Its function is as follows. Catalyzes the attachment of serine to tRNA(Ser). Is also able to aminoacylate tRNA(Sec) with serine, to form the misacylated tRNA L-seryl-tRNA(Sec), which will be further converted into selenocysteinyl-tRNA(Sec). This is Serine--tRNA ligase from Clavibacter michiganensis subsp. michiganensis (strain NCPPB 382).